A 282-amino-acid polypeptide reads, in one-letter code: Ubiquinone biosynthesis protein COQ4 homolog, mitochondrial (282 aa).

Residues 1-30 (MFVRKSCYSLINATRRCLRYRQLSSTTAGT) constitute a mitochondrion transit peptide. Zn(2+) contacts are provided by His186, Asp187, His190, and Glu202.

It belongs to the COQ4 family. In terms of assembly, component of a multi-subunit COQ enzyme complex. Zn(2+) is required as a cofactor.

The protein resides in the mitochondrion inner membrane. It carries out the reaction a 4-hydroxy-3-methoxy-5-(all-trans-polyprenyl)benzoate + H(+) = a 2-methoxy-6-(all-trans-polyprenyl)phenol + CO2. The protein operates within cofactor biosynthesis; ubiquinone biosynthesis. In terms of biological role, lyase that catalyzes the C1-decarboxylation of 4-hydroxy-3-methoxy-5-(all-trans-polyprenyl)benzoic acid into 2-methoxy-6-(all-trans-polyprenyl)phenol during ubiquinone biosynthesis. The protein is Ubiquinone biosynthesis protein COQ4 homolog, mitochondrial of Anopheles gambiae (African malaria mosquito).